Consider the following 372-residue polypeptide: Glycerophosphodiester phosphodiesterase GDPD6 (372 aa).

Positions 1–21 are cleaved as a signal peptide; it reads MAFKYLLPLLLLSLLVANCAS. The tract at residues 32–58 is disordered; the sequence is KHATKKPLQTSRPYNLAHRGSNGELPE. Residues 44–362 form the GP-PDE domain; sequence PYNLAHRGSN…DFTGSLHNYQ (319 aa). Residues asparagine 120, asparagine 239, and asparagine 260 are each glycosylated (N-linked (GlcNAc...) asparagine).

This sequence belongs to the glycerophosphoryl diester phosphodiesterase family. As to expression, expressed in flowers and siliques.

It catalyses the reaction a sn-glycero-3-phosphodiester + H2O = an alcohol + sn-glycerol 3-phosphate + H(+). The polypeptide is Glycerophosphodiester phosphodiesterase GDPD6 (Arabidopsis thaliana (Mouse-ear cress)).